We begin with the raw amino-acid sequence, 113 residues long: MEAKAVTRYVRISPLKVRLVMDVVRGMPVDRALATLRYMPQKAAREVARTLKSAIANAEHNFDMNRDELYIKTIYADQGPVLKRFMPRARGMANRIRKPTTHITVVVADKSDY.

The protein belongs to the universal ribosomal protein uL22 family. In terms of assembly, part of the 50S ribosomal subunit.

In terms of biological role, this protein binds specifically to 23S rRNA; its binding is stimulated by other ribosomal proteins, e.g. L4, L17, and L20. It is important during the early stages of 50S assembly. It makes multiple contacts with different domains of the 23S rRNA in the assembled 50S subunit and ribosome. The globular domain of the protein is located near the polypeptide exit tunnel on the outside of the subunit, while an extended beta-hairpin is found that lines the wall of the exit tunnel in the center of the 70S ribosome. The polypeptide is Large ribosomal subunit protein uL22 (Chloroflexus aggregans (strain MD-66 / DSM 9485)).